A 115-amino-acid chain; its full sequence is Hydrogenase maturation factor HypA (115 aa).

Residue His2 coordinates Ni(2+). 4 residues coordinate Zn(2+): Cys73, Cys76, Cys89, and Cys92.

This sequence belongs to the HypA/HybF family.

Its function is as follows. Involved in the maturation of [NiFe] hydrogenases. Required for nickel insertion into the metal center of the hydrogenase. The chain is Hydrogenase maturation factor HypA from Nitrosospira multiformis (strain ATCC 25196 / NCIMB 11849 / C 71).